The following is a 212-amino-acid chain: Uracil phosphoribosyltransferase (212 aa).

5-phospho-alpha-D-ribose 1-diphosphate is bound by residues arginine 78, arginine 103, and 130–138 (DPMLATGGS). Uracil-binding positions include isoleucine 193 and 198–200 (GDA). A 5-phospho-alpha-D-ribose 1-diphosphate-binding site is contributed by aspartate 199.

This sequence belongs to the UPRTase family. The cofactor is Mg(2+).

The enzyme catalyses UMP + diphosphate = 5-phospho-alpha-D-ribose 1-diphosphate + uracil. It functions in the pathway pyrimidine metabolism; UMP biosynthesis via salvage pathway; UMP from uracil: step 1/1. Allosterically activated by GTP. Its function is as follows. Catalyzes the conversion of uracil and 5-phospho-alpha-D-ribose 1-diphosphate (PRPP) to UMP and diphosphate. This Pseudomonas aeruginosa (strain LESB58) protein is Uracil phosphoribosyltransferase.